The following is a 408-amino-acid chain: Translation initiation factor 2 subunit gamma (408 aa).

Residues 4–201 (QSEINIGLVG…TIEERIKTPK (198 aa)) form the tr-type G domain. The tract at residues 13–20 (GHVDHGKT) is G1. Mg(2+) is bound by residues D16, T20, G41, and S43. 16–21 (DHGKTT) is a binding site for GTP. The G2 stretch occupies residues 41–45 (GISIR). Zn(2+) contacts are provided by C56, C59, C71, and C74. The segment at 88–91 (DAPG) is G3. GTP is bound by residues 144-147 (NKID) and 179-181 (SAQ). The tract at residues 144 to 147 (NKID) is G4. The G5 stretch occupies residues 179–181 (SAQ).

Belongs to the TRAFAC class translation factor GTPase superfamily. Classic translation factor GTPase family. EIF2G subfamily. In terms of assembly, heterotrimer composed of an alpha, a beta and a gamma chain. Requires Mg(2+) as cofactor.

It catalyses the reaction GTP + H2O = GDP + phosphate + H(+). In terms of biological role, eIF-2 functions in the early steps of protein synthesis by forming a ternary complex with GTP and initiator tRNA. The protein is Translation initiation factor 2 subunit gamma of Methanothermobacter thermautotrophicus (strain ATCC 29096 / DSM 1053 / JCM 10044 / NBRC 100330 / Delta H) (Methanobacterium thermoautotrophicum).